The sequence spans 681 residues: MAQFSDIDKLAVSTLRLLSVDQVESAQSGHPGAPLGLAPVAHVIFKQLRCNPNNEHWINRDRFVLSNGHSCALLYSMLHLLGYDYSIEDLRQFRQVNSRTPGHPEFHSAGVEITSGPLGQGISNAVGMAIAQANFAATYNEDGFPISDSYTFAIVGDGCLQEGVSSETSSLAGHLQLGNLITFYDSNSISIDGKTSYSFDEDVLKRYEAYGWEVMEVDKGDDDMESISSALEKAKLSKDKPTIIKVTTTIGFGSLQQGTAGVHGSALKADDVKQLKKRWGFDPNKSFVVPQEVYDYYKKTVVEPGQKLNEEWDRMFEEYKTKFPEKGKELQRRLNGELPEGWEKHLPKFTPDDDALATRKTSQQVLTNMVQVLPELIGGSADLTPSNLTRWEGAVDFQPPITQLGNYAGRYIRYGVREHGMGAIMNGISAFGANYKPYGGTFLNFVSYAAGAVRLAALSGNPVIWVATHDSIGLGEDGPTHQPIETLAHLRAIPNMHVWRPADGNETSAAYYSAIKSGRTPSVVALSRQNLPQLEHSSFEKALKGGYVIHDVENPDIILVSTGSEVSISIDAAKKLYDTKKIKARVVSLPDFYTFDRQSEEYRFSVLPDGVPIMSFEVLATSSWGKYAHQSFGLDEFGRSGKGPEIYKLFDFTADGVASRAEKTINYYKGKQLLSPMGRAF.

Position 30 (histidine 30) interacts with substrate. Thiamine diphosphate contacts are provided by residues histidine 69 and 116 to 118; that span reads GPL. Aspartate 157 is a binding site for Mg(2+). Positions 158 and 187 each coordinate thiamine diphosphate. Mg(2+)-binding residues include asparagine 187 and isoleucine 189. Residues histidine 263, arginine 359, and serine 386 each contribute to the substrate site. Histidine 263 contributes to the thiamine diphosphate binding site. Thiamine diphosphate-binding residues include glutamate 418 and phenylalanine 445. Residue glutamate 418 is the Proton donor of the active site. 3 residues coordinate substrate: histidine 469, aspartate 477, and arginine 528.

The protein belongs to the transketolase family. In terms of assembly, homodimer. Mg(2+) is required as a cofactor. The cofactor is Ca(2+). Requires Mn(2+) as cofactor. Co(2+) serves as cofactor. It depends on thiamine diphosphate as a cofactor.

The enzyme catalyses D-sedoheptulose 7-phosphate + D-glyceraldehyde 3-phosphate = aldehydo-D-ribose 5-phosphate + D-xylulose 5-phosphate. Functionally, catalyzes the transfer of a two-carbon ketol group from a ketose donor to an aldose acceptor, via a covalent intermediate with the cofactor thiamine pyrophosphate. The sequence is that of Transketolase 2 (TKL2) from Saccharomyces cerevisiae (strain ATCC 204508 / S288c) (Baker's yeast).